The following is a 535-amino-acid chain: Flavin-containing monooxygenase 1 (535 aa).

Alanine 2 is subject to N-acetylalanine. Topologically, residues 2–513 (AKRVAIVGAG…TRIVQESSSP (512 aa)) are lumenal. Residues 9–13 (GAGVS), glutamate 32, 40–41 (LW), and 61–62 (NS) each bind FAD. Residues 60–61 (SN) and 195–198 (SGTD) contribute to the NADP(+) site. The helical transmembrane segment at 514-534 (FESLLKLFAVLALLVSVFLIF) threads the bilayer. Residue leucine 535 is a topological domain, cytoplasmic.

It belongs to the FMO family. It depends on FAD as a cofactor. In terms of tissue distribution, liver.

It is found in the endoplasmic reticulum membrane. The enzyme catalyses hypotaurine + NADPH + O2 + H(+) = taurine + NADP(+) + H2O. The catalysed reaction is hypotaurine + NADH + O2 + H(+) = taurine + NAD(+) + H2O. It catalyses the reaction trimethylamine + NADPH + O2 = trimethylamine N-oxide + NADP(+) + H2O. It carries out the reaction N,N-dimethylaniline + NADPH + O2 + H(+) = N,N-dimethylaniline N-oxide + NADP(+) + H2O. Broad spectrum monooxygenase that catalyzes the oxygenation of a wide variety of nitrogen- and sulfur-containing compounds including xenobiotics. Catalyzes the S-oxygenation of hypotaurine to produce taurine, an organic osmolyte involved in cell volume regulation as well as a variety of cytoprotective and developmental processes. In vitro, catalyzes the N-oxygenation of trimethylamine (TMA) to produce trimethylamine N-oxide (TMAO) and could therefore participate to the detoxification of this compound that is generated by the action of gut microbiota from dietary precursors such as choline, choline containing compounds, betaine or L-carnitine. The polypeptide is Flavin-containing monooxygenase 1 (FMO1) (Oryctolagus cuniculus (Rabbit)).